The following is a 439-amino-acid chain: Large ribosomal subunit protein mL65 (439 aa).

Belongs to the mitochondrion-specific ribosomal protein mL65 family. As to quaternary structure, component of the mitochondrial large ribosomal subunit (mt-LSU). Mature mammalian 55S mitochondrial ribosomes consist of a small (28S) and a large (39S) subunit. The 28S small subunit contains a 12S ribosomal RNA (12S mt-rRNA) and 30 different proteins. The 39S large subunit contains a 16S rRNA (16S mt-rRNA), a copy of mitochondrial valine transfer RNA (mt-tRNA(Val)), which plays an integral structural role, and 52 different proteins. mL65 forms a heterodimer with mL37. Heart, skeletal muscle, kidney and liver. Lower expression in placenta and peripheral blood leukocytes.

Its subcellular location is the mitochondrion. The sequence is that of Large ribosomal subunit protein mL65 (MRPS30) from Homo sapiens (Human).